We begin with the raw amino-acid sequence, 290 residues long: MTAATHTKAQVLAAALPWLKQLHGKIVVVKYGGNAMTDDTLKAAFAADMVFLRNCGVHPVVVHGGGPQISAMLKRLGIPGDFRGGFRVTTPEVLDVARMVLFGQVGRELVGLINAHGPYAVGITGEDAHLFTAVRRDVMVDGVATDIGLVGDVEHVNTEAVRDLIAAGRIPVVSTIAPDANGVVHNINADTAAAALAAALSAEKLLMLTDIEGLYTDWPDRNSLVSQINTADLTELLPTLEAGMVPKIEACLRAVTEGVPSAHVIDGRVEHCVLVELFTDEGTGTKVVNP.

Residues 65–66, R87, and N186 each bind substrate; that span reads GG.

The protein belongs to the acetylglutamate kinase family. ArgB subfamily.

It localises to the cytoplasm. The catalysed reaction is N-acetyl-L-glutamate + ATP = N-acetyl-L-glutamyl 5-phosphate + ADP. The protein operates within amino-acid biosynthesis; L-arginine biosynthesis; N(2)-acetyl-L-ornithine from L-glutamate: step 2/4. Functionally, catalyzes the ATP-dependent phosphorylation of N-acetyl-L-glutamate. This is Acetylglutamate kinase from Mycobacterium sp. (strain JLS).